A 256-amino-acid chain; its full sequence is 5'-nucleotidase SurE (256 aa).

Asp-9, Asp-10, Ser-40, and Asn-94 together coordinate a divalent metal cation.

Belongs to the SurE nucleotidase family. It depends on a divalent metal cation as a cofactor.

It is found in the cytoplasm. It catalyses the reaction a ribonucleoside 5'-phosphate + H2O = a ribonucleoside + phosphate. In terms of biological role, nucleotidase that shows phosphatase activity on nucleoside 5'-monophosphates. This chain is 5'-nucleotidase SurE, found in Campylobacter fetus subsp. fetus (strain 82-40).